A 594-amino-acid polypeptide reads, in one-letter code: RAS guanyl-releasing protein 2-B (594 aa).

The N-terminal Ras-GEF domain occupies 3–121 (SSDLDKGLTI…SLIDIESVPS (119 aa)). In terms of domain architecture, Ras-GEF spans 149-382 (DPAELAEHLT…YQLSLQREPR (234 aa)). The disordered stretch occupies residues 377–403 (LQREPRARSTQTHAKSPPSPSPPLEEW). EF-hand domains follow at residues 418-453 (HIEK…FPYL) and 455-482 (AFNE…ASSV). Residues Asp431, Asp433, Asp435, His437, Glu442, Asp460, Asn462, Asp464, Lys466, and Glu471 each contribute to the Ca(2+) site. A Phorbol-ester/DAG-type zinc finger spans residues 490–540 (IHNFAERTFLRPVSCQHCRNLILGIYKKGLKCKACGITCHKHCRDHLSIEC).

Belongs to the RASGRP family.

It localises to the cytoplasm. The protein resides in the cytosol. Its subcellular location is the cell membrane. It is found in the synapse. The protein localises to the synaptosome. In terms of biological role, functions as a calcium- and DAG-regulated nucleotide exchange factor specifically activating Rap through the exchange of bound GDP for GTP. May function in cell aggregation and adhesion. The chain is RAS guanyl-releasing protein 2-B (rasgrp2-b) from Xenopus laevis (African clawed frog).